A 486-amino-acid polypeptide reads, in one-letter code: O-methyltransferase gedA (486 aa).

S-adenosyl-L-methionine-binding positions include 298–299 (GG), aspartate 321, 353–354 (SF), and arginine 369. Histidine 373 serves as the catalytic Proton acceptor.

The protein belongs to the class I-like SAM-binding methyltransferase superfamily. Cation-independent O-methyltransferase family.

It catalyses the reaction emodin + S-adenosyl-L-methionine = questin + S-adenosyl-L-homocysteine + H(+). Its pathway is secondary metabolite biosynthesis. Functionally, O-methyltransferase; part of the gene cluster that mediates the biosynthesis of geodin, an intermediate in the biosynthesis of other natural products. The pathway begins with the synthesis of atrochrysone thioester by the polyketide synthase (PKS) gedC. The atrochrysone carboxyl ACP thioesterase gedB then breaks the thioester bond and releases the atrochrysone carboxylic acid from gedC. The atrochrysone carboxylic acid is then converted to atrochrysone which is further transformed into emodinanthrone. The next step is performed by the emodinanthrone oxygenase gedH that catalyzes the oxidation of emodinanthrone to emodin. Emodin O-methyltransferase encoded probably by gedA then catalyzes methylation of the 8-hydroxy group of emodin to form questin. Ring cleavage of questin by questin oxidase gedK leads to desmethylsulochrin via several intermediates including questin epoxide. Another methylation step probably catalyzed by methyltransferase gedG leads to the formation of sulochrin which is further converted to dihydrogeodin by the sulochrin halogenase gedL. Finally, the dihydrogeodin oxidase gedJ catalyzes the stereospecific phenol oxidative coupling reaction converting dihydrogeodin to geodin. The polypeptide is O-methyltransferase gedA (Aspergillus terreus (strain NIH 2624 / FGSC A1156)).